The sequence spans 367 residues: 2-aminoethylphosphonate--pyruvate transaminase (367 aa).

Lys-193 is modified (N6-(pyridoxal phosphate)lysine).

Belongs to the class-V pyridoxal-phosphate-dependent aminotransferase family. PhnW subfamily. In terms of assembly, homodimer. Requires pyridoxal 5'-phosphate as cofactor.

The catalysed reaction is (2-aminoethyl)phosphonate + pyruvate = phosphonoacetaldehyde + L-alanine. In terms of biological role, involved in phosphonate degradation. The polypeptide is 2-aminoethylphosphonate--pyruvate transaminase (Vibrio cholerae serotype O1 (strain ATCC 39541 / Classical Ogawa 395 / O395)).